A 1293-amino-acid chain; its full sequence is Phosphoribosylformylglycinamidine synthase (1293 aa).

ATP is bound by residues 305 to 316 and Ala676; that span reads GAATGSGGEIRD. Residues Asp677, Glu716, Asn720, and Asp884 each contribute to the Mg(2+) site. Ser886 provides a ligand contact to ATP. Residues 1040 to 1293 form the Glutamine amidotransferase type-1 domain; it reads MAILREQGVN…MFRNARVKLG (254 aa). Cys1133 (nucleophile) is an active-site residue. Active-site residues include His1258 and Glu1260.

The protein in the N-terminal section; belongs to the FGAMS family. As to quaternary structure, monomer.

The protein localises to the cytoplasm. The enzyme catalyses N(2)-formyl-N(1)-(5-phospho-beta-D-ribosyl)glycinamide + L-glutamine + ATP + H2O = 2-formamido-N(1)-(5-O-phospho-beta-D-ribosyl)acetamidine + L-glutamate + ADP + phosphate + H(+). It functions in the pathway purine metabolism; IMP biosynthesis via de novo pathway; 5-amino-1-(5-phospho-D-ribosyl)imidazole from N(2)-formyl-N(1)-(5-phospho-D-ribosyl)glycinamide: step 1/2. Functionally, phosphoribosylformylglycinamidine synthase involved in the purines biosynthetic pathway. Catalyzes the ATP-dependent conversion of formylglycinamide ribonucleotide (FGAR) and glutamine to yield formylglycinamidine ribonucleotide (FGAM) and glutamate. The sequence is that of Phosphoribosylformylglycinamidine synthase from Shewanella denitrificans (strain OS217 / ATCC BAA-1090 / DSM 15013).